Consider the following 1072-residue polypeptide: MLGDGNGGMCTIPGFNQIQFEGFCRFIDQGLTEELSKFPKIEDDTDQEIEFQLFVETYHLVEPLIKERDAVYELLTYSSELYISAGLIWKSSRDMQKQTIFIGNIPLMNSLGTSIVNGIYRIVINQILQSPGIYYRSELDHNGISVYTGTIISDWGGRLELEIDRKARIWARVSRKQKISILVLSSAMGSNLREILENVCYPEMFLSFLNEKEKKTIGSKENAILEFYQQFSCVGGDPVFSESLCKELHTKFFQQRCELGRIGRQNMNRRLNLDIPQHNTFLLPRDILAAADHLIGMKFGMGTLDDTNHLKNKRIRSVADLLQDQFGLALVRLESVVRRTICGAIRHKLIPTPHNLVTSTPLTTTYESFFGLHPLSQVLDRTNPLTQIVHGRKLSYLGPGGLTARTASFRMRDIHPSYYGRICPIDTSEGINVGLIGSLAIHARIGRGGSLESPFYEISERSNKGRMLYFSPSRDEYYMVAAGNSLALNRGIQEEQVVPARYRQEFLTLAWDQVHLRSIFPFQYFSIGASLIPFIEHNDANRALMSSNMQRQAVPLSQSERCIVGTGLERQASLDSGVTAIAEREGKIIYTNSDKIILSGSGDTLSIPLVMYQRSNKNTWMHQKPQVPRGKCIKKGQILADGAATVGGELALGKNVLVAYMPWEGYNFEDAVLISERLVYEDIYTSFHIRKYEMQTHVTSQGPERITNEIPHLEAHLLRNLDKNGIVMMGSWVEAGEILVGKLTPQMAEEESSYAPEERLLRAILGIQISTSKETCLKLPIGGRGRVIDVRWIQKRGGSSYNPETIRVYILQKREIKVGDKVAGRHGNKGIISKILPRQDMPYLQDGRPVDMVFNPLGVPSRMNVGQIFECSLGFAGDLLERHYRIAPFDERYEQEASRKLVFSELYEASKQTANPWVFEPEYPGKSRLFDGRTGDPFEQPVIIGKPYILKLIHQVDDKIHGRSSGHYARVTQQPLRGRAKQGGQRVGEMEVWALEGFGVAHLLQEMLTYKSDHIRARQGVLGTTILGGTIPKPEDAPESFRLLVRELRSLALELNHFLVSEKNFQINRKEA.

The protein belongs to the RNA polymerase beta chain family. As to quaternary structure, in plastids the minimal PEP RNA polymerase catalytic core is composed of four subunits: alpha, beta, beta', and beta''. When a (nuclear-encoded) sigma factor is associated with the core the holoenzyme is formed, which can initiate transcription.

It is found in the plastid. The protein localises to the chloroplast. It catalyses the reaction RNA(n) + a ribonucleoside 5'-triphosphate = RNA(n+1) + diphosphate. DNA-dependent RNA polymerase catalyzes the transcription of DNA into RNA using the four ribonucleoside triphosphates as substrates. The chain is DNA-directed RNA polymerase subunit beta from Oenothera elata subsp. hookeri (Hooker's evening primrose).